The sequence spans 118 residues: Small ribosomal subunit protein uS13 (118 aa).

Positions 92 to 118 (KKHLPVRGQRTKTNARTRKGPRKPIKK) are disordered.

This sequence belongs to the universal ribosomal protein uS13 family. In terms of assembly, part of the 30S ribosomal subunit. Forms a loose heterodimer with protein S19. Forms two bridges to the 50S subunit in the 70S ribosome.

In terms of biological role, located at the top of the head of the 30S subunit, it contacts several helices of the 16S rRNA. In the 70S ribosome it contacts the 23S rRNA (bridge B1a) and protein L5 of the 50S subunit (bridge B1b), connecting the 2 subunits; these bridges are implicated in subunit movement. Contacts the tRNAs in the A and P-sites. This chain is Small ribosomal subunit protein uS13, found in Wigglesworthia glossinidia brevipalpis.